Here is a 201-residue protein sequence, read N- to C-terminus: Large ribosomal subunit protein uL4 (201 aa).

The interval 45–66 (AQKSRAEVVGSNKKPWRQKGTG) is disordered.

It belongs to the universal ribosomal protein uL4 family. As to quaternary structure, part of the 50S ribosomal subunit.

In terms of biological role, one of the primary rRNA binding proteins, this protein initially binds near the 5'-end of the 23S rRNA. It is important during the early stages of 50S assembly. It makes multiple contacts with different domains of the 23S rRNA in the assembled 50S subunit and ribosome. Forms part of the polypeptide exit tunnel. This chain is Large ribosomal subunit protein uL4, found in Baumannia cicadellinicola subsp. Homalodisca coagulata.